Reading from the N-terminus, the 314-residue chain is Ribosomal protein L11 methyltransferase (314 aa).

4 residues coordinate S-adenosyl-L-methionine: threonine 152, glycine 184, aspartate 206, and asparagine 248.

Belongs to the methyltransferase superfamily. PrmA family.

The protein resides in the cytoplasm. It catalyses the reaction L-lysyl-[protein] + 3 S-adenosyl-L-methionine = N(6),N(6),N(6)-trimethyl-L-lysyl-[protein] + 3 S-adenosyl-L-homocysteine + 3 H(+). Functionally, methylates ribosomal protein L11. The protein is Ribosomal protein L11 methyltransferase of Geotalea daltonii (strain DSM 22248 / JCM 15807 / FRC-32) (Geobacter daltonii).